A 339-amino-acid polypeptide reads, in one-letter code: Phenylalanine--tRNA ligase alpha subunit (339 aa).

E250 contributes to the Mg(2+) binding site.

The protein belongs to the class-II aminoacyl-tRNA synthetase family. Phe-tRNA synthetase alpha subunit type 1 subfamily. As to quaternary structure, tetramer of two alpha and two beta subunits. Mg(2+) serves as cofactor.

Its subcellular location is the cytoplasm. It catalyses the reaction tRNA(Phe) + L-phenylalanine + ATP = L-phenylalanyl-tRNA(Phe) + AMP + diphosphate + H(+). In Parabacteroides distasonis (strain ATCC 8503 / DSM 20701 / CIP 104284 / JCM 5825 / NCTC 11152), this protein is Phenylalanine--tRNA ligase alpha subunit.